We begin with the raw amino-acid sequence, 183 residues long: Lipid droplet coating protein mpl1 (183 aa).

The protein belongs to the perilipin family.

The protein localises to the lipid droplet. Functionally, lipid droplet coating protein that regulates lipid metabolism, appressorial turgor pressure, and virulence. Appressorial turgor pressure is important for breaching the insect cuticle during infection. This chain is Lipid droplet coating protein mpl1, found in Metarhizium robertsii (strain ARSEF 23 / ATCC MYA-3075) (Metarhizium anisopliae (strain ARSEF 23)).